Here is a 176-residue protein sequence, read N- to C-terminus: Nuclear transcription factor Y subunit B-10 (176 aa).

Residues 1–15 (MAESQTGGGGGGSHE) show a composition bias toward gly residues. A disordered region spans residues 1–29 (MAESQTGGGGGGSHESGGDQSPRSLNVRE). Ala2 bears the N-acetylalanine mark. The DNA-binding element occupies 34 to 40 (LPIANIS). The tract at residues 61–72 (MQECVSEFISFV) is subunit association domain (SAD). The interval 121–176 (GDTKGSGKGGESSAKRDGQPSQVSQFSQVPQQGSFSQGPYGNSQGSNMMVQMPGTE) is disordered. Residues 139 to 159 (QPSQVSQFSQVPQQGSFSQGP) are compositionally biased toward low complexity. Positions 160 to 169 (YGNSQGSNMM) are enriched in polar residues.

It belongs to the NFYB/HAP3 subunit family. Heterotrimeric transcription factor composed of three components, NF-YA, NF-YB and NF-YC. NF-YB and NF-YC must interact and dimerize for NF-YA association and DNA binding. As to expression, expressed in the whole plant, except roots.

Its subcellular location is the nucleus. Component of the NF-Y/HAP transcription factor complex. The NF-Y complex stimulates the transcription of various genes by recognizing and binding to a CCAAT motif in promoters. The protein is Nuclear transcription factor Y subunit B-10 (NFYB10) of Arabidopsis thaliana (Mouse-ear cress).